Here is a 205-residue protein sequence, read N- to C-terminus: DNA-directed RNA polymerase RPB5 homolog (205 aa).

This sequence belongs to the archaeal RpoH/eukaryotic RPB5 RNA polymerase subunit family. As to quaternary structure, part of the viral DNA-directed RNA polymerase that consists of 8 polII-like subunits (RPB1, RPB2, RPB3, RPB5, RPB6, RPB7, RPB9, RPB10), a capping enzyme and a termination factor.

Its subcellular location is the host cytoplasm. It is found in the virion. In terms of biological role, component of the DNA-directed RNA polymerase (RNAP) that catalyzes the transcription in the cytoplasm of viral DNA into RNA using the four ribonucleoside triphosphates as substrates. The chain is DNA-directed RNA polymerase RPB5 homolog from Ornithodoros (relapsing fever ticks).